The primary structure comprises 211 residues: Phosphoglycerate mutase (211 aa).

Substrate contacts are provided by residues 14–21 (RHGESEWN) and 27–28 (TG). His15 acts as the Tele-phosphohistidine intermediate in catalysis. Residue Thr37 is modified to Phosphothreonine. Ser62 is modified (phosphoserine). Substrate contacts are provided by residues Arg66, 93–96 (ERYY), Lys104, 120–121 (RR), and 164–165 (GN). The active-site Proton donor/acceptor is Glu93. Tyr96 carries the phosphotyrosine modification. At Ser166 the chain carries Phosphoserine.

This sequence belongs to the phosphoglycerate mutase family. BPG-dependent PGAM subfamily. Monomer. In terms of processing, the N-terminus is blocked.

The enzyme catalyses (2R)-2-phosphoglycerate = (2R)-3-phosphoglycerate. The protein operates within carbohydrate degradation; glycolysis; pyruvate from D-glyceraldehyde 3-phosphate: step 3/5. The protein is Phosphoglycerate mutase (gpm1) of Schizosaccharomyces pombe (strain 972 / ATCC 24843) (Fission yeast).